Here is a 382-residue protein sequence, read N- to C-terminus: Galactokinase (382 aa).

34–37 (EHTD) lines the substrate pocket. ATP is bound at residue 124 to 130 (GAGLSSS). Mg(2+)-binding residues include Ser-130 and Glu-162. The active-site Proton acceptor is the Asp-174. Residue Tyr-223 participates in substrate binding.

The protein belongs to the GHMP kinase family. GalK subfamily.

The protein localises to the cytoplasm. The catalysed reaction is alpha-D-galactose + ATP = alpha-D-galactose 1-phosphate + ADP + H(+). Its pathway is carbohydrate metabolism; galactose metabolism. Its function is as follows. Catalyzes the transfer of the gamma-phosphate of ATP to D-galactose to form alpha-D-galactose-1-phosphate (Gal-1-P). This Escherichia coli O1:K1 / APEC protein is Galactokinase.